Here is a 335-residue protein sequence, read N- to C-terminus: Biotin synthase (335 aa).

Residues 46–274 (YKVQLASLFS…KSKIRLSAGR (229 aa)) form the Radical SAM core domain. [4Fe-4S] cluster is bound by residues Cys61, Cys65, and Cys68. The [2Fe-2S] cluster site is built by Cys105, Cys137, Cys197, and Arg269.

The protein belongs to the radical SAM superfamily. Biotin synthase family. Homodimer. It depends on [4Fe-4S] cluster as a cofactor. Requires [2Fe-2S] cluster as cofactor.

The enzyme catalyses (4R,5S)-dethiobiotin + (sulfur carrier)-SH + 2 reduced [2Fe-2S]-[ferredoxin] + 2 S-adenosyl-L-methionine = (sulfur carrier)-H + biotin + 2 5'-deoxyadenosine + 2 L-methionine + 2 oxidized [2Fe-2S]-[ferredoxin]. It functions in the pathway cofactor biosynthesis; biotin biosynthesis; biotin from 7,8-diaminononanoate: step 2/2. In terms of biological role, catalyzes the conversion of dethiobiotin (DTB) to biotin by the insertion of a sulfur atom into dethiobiotin via a radical-based mechanism. This is Biotin synthase from Prochlorococcus marinus subsp. pastoris (strain CCMP1986 / NIES-2087 / MED4).